We begin with the raw amino-acid sequence, 1185 residues long: Ubiquitin carboxyl-terminal hydrolase 36 (1185 aa).

A compositionally biased stretch (polar residues) spans 126 to 169 (TGKALSSNGHDNTNGVNGSSAATVNGNRKQTVEQSNQNSTTNPN). Positions 126-174 (TGKALSSNGHDNTNGVNGSSAATVNGNRKQTVEQSNQNSTTNPNELPKP) are disordered. The 311-residue stretch at 199–509 (AGMLNVGNTC…NAYIMFYELD (311 aa)) folds into the USP domain. Cysteine 208 serves as the catalytic Nucleophile. The active-site Proton acceptor is the histidine 468. Phosphoserine is present on residues serine 552 and serine 554. A compositionally biased stretch (low complexity) spans 642–658 (ANSNKSSCNNNTLTTNS). 4 disordered regions span residues 642-804 (ANSN…TDAI), 818-975 (HRAT…YQSE), 1056-1122 (APTL…GSFP), and 1136-1185 (NKFK…QQQS). Residues 670-683 (SDEEDEDEDSDDDV) show a composition bias toward acidic residues. The residue at position 716 (threonine 716) is a Phosphothreonine. Residues serine 726 and serine 728 each carry the phosphoserine modification. Low complexity-rich tracts occupy residues 778–797 (KSNG…SNNN) and 836–853 (QQQQ…SLIS). Serine 867 carries the post-translational modification Phosphoserine. Threonine 870 bears the Phosphothreonine mark. At serine 873 the chain carries Phosphoserine. Positions 891 to 920 (DDNDDDDEDADEEDDADADAEQEEYDDEVV) are enriched in acidic residues. Polar residues-rich tracts occupy residues 924–942 (TTPS…SKPS) and 959–975 (SAKS…YQSE). Position 925 is a phosphothreonine (threonine 925). The segment covering 1062–1071 (EAREQRKRDA) has biased composition (basic and acidic residues). 2 stretches are compositionally biased toward low complexity: residues 1151–1161 (QQQRALQRHLA) and 1172–1185 (QSTG…QQQS).

The protein belongs to the peptidase C19 family. As to quaternary structure, interacts with atms/PAF1, but not with CycT.

It localises to the nucleus. It is found in the nucleolus. The enzyme catalyses Thiol-dependent hydrolysis of ester, thioester, amide, peptide and isopeptide bonds formed by the C-terminal Gly of ubiquitin (a 76-residue protein attached to proteins as an intracellular targeting signal).. Functionally, required for maintaining multiple types of adult stem cells, including male and female germline, epithelial follicle cell and intestinal stem cells. May function as a transcriptional repressor by continually deubiquiting histone H2B at the promoters of genes critical for cellular differentiation, thereby preventing histone H3 'Lys-4' trimethylation (H3K4). Controls selective autophagy activation by ubiquitinated proteins. The polypeptide is Ubiquitin carboxyl-terminal hydrolase 36 (Usp36) (Drosophila mojavensis (Fruit fly)).